A 528-amino-acid polypeptide reads, in one-letter code: Na(+)/H(+) antiporter NhaB (528 aa).

10 helical membrane passes run 20–39, 66–86, 97–117, 139–159, 241–261, 304–324, 349–369, 390–410, 448–468, and 476–496; these read WFKIAIISFLVINPIVFYFN, PGGLLAIEAVAIGMTSPSQVL, LLLVFMVAGIYFMKQLLLFVF, AFLSAFLDALTVIAVIITVAV, IRMSPVTVPVFFAGITTCFLV, AVIGVWLIAGLALHLASVGLI, EEALPFTALLAVFFAIVAVII, LVIFYIANGLLSMVSDNVFVG, ATPNGQAAFLFLLTSAIAPLI, and VWMALPYTIVLSIVGVLAIQL.

Belongs to the NhaB Na(+)/H(+) (TC 2.A.34) antiporter family.

The protein resides in the cell inner membrane. It carries out the reaction 2 Na(+)(in) + 3 H(+)(out) = 2 Na(+)(out) + 3 H(+)(in). In terms of biological role, na(+)/H(+) antiporter that extrudes sodium in exchange for external protons. This Shewanella pealeana (strain ATCC 700345 / ANG-SQ1) protein is Na(+)/H(+) antiporter NhaB.